We begin with the raw amino-acid sequence, 306 residues long: Mitochondrial brown fat uncoupling protein 1 (306 aa).

Residues 1–10 lie on the Mitochondrial intermembrane side of the membrane; the sequence is MVGTTATDVA. A helical transmembrane segment spans residues 11 to 32; sequence PTMGVKIFSAGVAACLADVITF. Solcar repeat units follow at residues 11-102, 110-200, and 209-294; these read PTMG…VQEF, PSLR…MKGA, and DDVP…LKRE. Topologically, residues 33–73 are mitochondrial matrix; the sequence is PLDTAKVRLQIQGECQTTSGIRYKGVLGTITTLAKTEGPLK. Lysine 56 lines the fatty acid 16:0 pocket. A helical membrane pass occupies residues 74-96; it reads LYSGLPAGLQRQISFASLRIGLY. Residues 97-115 lie on the Mitochondrial intermembrane side of the membrane; sequence DTVQEFWGGEEATPSLRSK. Residues 116–132 traverse the membrane as a helical segment; that stretch reads ICAGLTTGGVAVFIGQP. Residues 133–177 lie on the Mitochondrial matrix side of the membrane; that stretch reads TEVVKVRLQAQSHLHGLKPRYTGTYNAYRIIATTESLSTLWKGTT. A helical transmembrane segment spans residues 178–194; sequence PNLLRNIIINCTELVTY. The Mitochondrial intermembrane portion of the chain corresponds to 195-211; sequence DLMKGALVRNDILADDV. A helical transmembrane segment spans residues 212-231; the sequence is PCHLLSALIAGFCTTLLSSP. Residues 232-265 lie on the Mitochondrial matrix side of the membrane; the sequence is VDVVKTRFINSPQGQYTSVPSCAMSMLTKEGPTA. A Cysteine sulfenic acid (-SOH) modification is found at cysteine 253. Residues 266–288 form a helical membrane-spanning segment; it reads FFKGFAPSFLRLASWNVIMFVCF. Lysine 268 provides a ligand contact to fatty acid 16:0. The Mitochondrial intermembrane segment spans residues 289 to 306; the sequence is EKLKRELMKSRQTVDCAT.

Belongs to the mitochondrial carrier (TC 2.A.29) family. Most probably functions as a monomer. Binds one purine nucleotide per monomer. However, has also been suggested to function as a homodimer or a homotetramer. Tightly associates with cardiolipin in the mitochondrion inner membrane; may stabilize and regulate its activity. In terms of processing, may undergo sulfenylation upon cold exposure. May increase the sensitivity of UCP1 thermogenic function to the activation by noradrenaline probably through structural effects. Post-translationally, may undergo ubiquitin-mediated proteasomal degradation.

The protein localises to the mitochondrion inner membrane. It carries out the reaction H(+)(in) = H(+)(out). Its activity is regulated as follows. Has no constitutive proton transporter activity and has to be activated by long-chain fatty acids/LCFAs. Inhibited by purine nucleotides. Both purine nucleotides and LCFAs bind the cytosolic side of the transporter and directly compete to activate or inhibit it. Activated by noradrenaline and reactive oxygen species. Despite lacking canonical translational encoding for selenocysteine, a small pool of the protein has been observed to selectively incorporate selenocysteine at 'Cys-253'. Selenocysteine-modified protein is highly sensitive to redox modification and may constitute a pool of protein highly sensitive to activation by elevated levels of reactive oxygen species (ROS). Functionally, mitochondrial protein responsible for thermogenic respiration, a specialized capacity of brown adipose tissue and beige fat that participates in non-shivering adaptive thermogenesis to temperature and diet variations and more generally to the regulation of energy balance. Functions as a long-chain fatty acid/LCFA and proton symporter, simultaneously transporting one LCFA and one proton through the inner mitochondrial membrane. However, LCFAs remaining associated with the transporter via their hydrophobic tails, it results in an apparent transport of protons activated by LCFAs. Thereby, dissipates the mitochondrial proton gradient and converts the energy of substrate oxydation into heat instead of ATP. Regulates the production of reactive oxygen species/ROS by mitochondria. In Ochotona dauurica (Daurian pika), this protein is Mitochondrial brown fat uncoupling protein 1.